A 213-amino-acid chain; its full sequence is Orotate phosphoribosyltransferase (213 aa).

Residue Lys-26 coordinates 5-phospho-alpha-D-ribose 1-diphosphate. Position 34-35 (Phe-34–Phe-35) interacts with orotate. 5-phospho-alpha-D-ribose 1-diphosphate is bound by residues Tyr-72–Lys-73, Arg-99, Lys-100, Lys-103, His-105, and Asp-124–Ala-132. 2 residues coordinate orotate: Thr-128 and Arg-156.

It belongs to the purine/pyrimidine phosphoribosyltransferase family. PyrE subfamily. As to quaternary structure, homodimer. The cofactor is Mg(2+).

The catalysed reaction is orotidine 5'-phosphate + diphosphate = orotate + 5-phospho-alpha-D-ribose 1-diphosphate. The protein operates within pyrimidine metabolism; UMP biosynthesis via de novo pathway; UMP from orotate: step 1/2. Functionally, catalyzes the transfer of a ribosyl phosphate group from 5-phosphoribose 1-diphosphate to orotate, leading to the formation of orotidine monophosphate (OMP). In Shigella flexneri serotype 5b (strain 8401), this protein is Orotate phosphoribosyltransferase.